Here is a 595-residue protein sequence, read N- to C-terminus: Beta-(1--&gt;2)glucan export ATP-binding/permease protein NdvA (595 aa).

5 helical membrane-spanning segments follow: residues Phe21–Leu41, Leu56–Val76, Ile129–Pro149, Leu158–Gln178, and Ile252–Val272. The ABC transmembrane type-1 domain occupies Phe21–Ser301. In terms of domain architecture, ABC transporter spans Ile335–Ala569. Gly368 to Thr375 serves as a coordination point for ATP.

This sequence belongs to the ABC transporter superfamily. Beta-(1--&gt;2)glucan exporter (TC 3.A.1.108.1) family. In terms of assembly, homodimer.

It localises to the cell inner membrane. It catalyses the reaction [(1-&gt;2)-beta-D-glucosyl](n)(in) + ATP + H2O = [(1-&gt;2)-beta-D-glucosyl](n)(out) + ADP + phosphate + H(+). Functionally, involved in beta-(1--&gt;2)glucan export. Transmembrane domains (TMD) form a pore in the inner membrane and the ATP-binding domain (NBD) is responsible for energy generation. This Bartonella bacilliformis (strain ATCC 35685 / KC583 / Herrer 020/F12,63) protein is Beta-(1--&gt;2)glucan export ATP-binding/permease protein NdvA.